A 404-amino-acid polypeptide reads, in one-letter code: Cysteine desulfurase IscS (404 aa).

Residues 73-74 (AT), N153, Q181, and 201-203 (SAH) contribute to the pyridoxal 5'-phosphate site. At K204 the chain carries N6-(pyridoxal phosphate)lysine. Position 241 (T241) interacts with pyridoxal 5'-phosphate. The Cysteine persulfide intermediate role is filled by C327. Residue C327 participates in [2Fe-2S] cluster binding.

It belongs to the class-V pyridoxal-phosphate-dependent aminotransferase family. NifS/IscS subfamily. Homodimer. Forms a heterotetramer with IscU, interacts with other sulfur acceptors. Pyridoxal 5'-phosphate serves as cofactor.

It localises to the cytoplasm. The enzyme catalyses (sulfur carrier)-H + L-cysteine = (sulfur carrier)-SH + L-alanine. It functions in the pathway cofactor biosynthesis; iron-sulfur cluster biosynthesis. In terms of biological role, master enzyme that delivers sulfur to a number of partners involved in Fe-S cluster assembly, tRNA modification or cofactor biosynthesis. Catalyzes the removal of elemental sulfur atoms from cysteine to produce alanine. Functions as a sulfur delivery protein for Fe-S cluster synthesis onto IscU, an Fe-S scaffold assembly protein, as well as other S acceptor proteins. This is Cysteine desulfurase IscS from Anaeromyxobacter sp. (strain Fw109-5).